Consider the following 524-residue polypeptide: Probable serine/threonine-protein kinase WNK10 (524 aa).

The Protein kinase domain maps to 16-273 (IRYNDVLGRG…ALELLKDQLL (258 aa)). ATP contacts are provided by residues 96 to 99 (TELF) and Lys146. Asp163 acts as the Proton acceptor in catalysis. Phosphoserine is present on Ser477. A coiled-coil region spans residues 480-523 (SNKQSEDLKTELNVIESQYNQSCQRLLRMKEEAIEKAKRKWMKL).

Belongs to the protein kinase superfamily. Ser/Thr protein kinase family. WNK subfamily.

It catalyses the reaction L-seryl-[protein] + ATP = O-phospho-L-seryl-[protein] + ADP + H(+). The enzyme catalyses L-threonyl-[protein] + ATP = O-phospho-L-threonyl-[protein] + ADP + H(+). May regulate flowering time by modulating the photoperiod pathway. This chain is Probable serine/threonine-protein kinase WNK10 (WNK10), found in Arabidopsis thaliana (Mouse-ear cress).